The following is a 342-amino-acid chain: Holliday junction branch migration complex subunit RuvB (342 aa).

The large ATPase domain (RuvB-L) stretch occupies residues methionine 1 to tyrosine 179. Residues isoleucine 18, arginine 19, glycine 60, lysine 63, threonine 64, threonine 65, glutamate 126 to phenylalanine 128, arginine 169, tyrosine 179, and arginine 216 each bind ATP. A Mg(2+)-binding site is contributed by threonine 64. The tract at residues asparagine 180 to threonine 250 is small ATPAse domain (RuvB-S). Residues serine 253 to glutamate 342 are head domain (RuvB-H). Arginine 289, arginine 308, and arginine 313 together coordinate DNA.

Belongs to the RuvB family. Homohexamer. Forms an RuvA(8)-RuvB(12)-Holliday junction (HJ) complex. HJ DNA is sandwiched between 2 RuvA tetramers; dsDNA enters through RuvA and exits via RuvB. An RuvB hexamer assembles on each DNA strand where it exits the tetramer. Each RuvB hexamer is contacted by two RuvA subunits (via domain III) on 2 adjacent RuvB subunits; this complex drives branch migration. In the full resolvosome a probable DNA-RuvA(4)-RuvB(12)-RuvC(2) complex forms which resolves the HJ.

It localises to the cytoplasm. It carries out the reaction ATP + H2O = ADP + phosphate + H(+). The RuvA-RuvB-RuvC complex processes Holliday junction (HJ) DNA during genetic recombination and DNA repair, while the RuvA-RuvB complex plays an important role in the rescue of blocked DNA replication forks via replication fork reversal (RFR). RuvA specifically binds to HJ cruciform DNA, conferring on it an open structure. The RuvB hexamer acts as an ATP-dependent pump, pulling dsDNA into and through the RuvAB complex. RuvB forms 2 homohexamers on either side of HJ DNA bound by 1 or 2 RuvA tetramers; 4 subunits per hexamer contact DNA at a time. Coordinated motions by a converter formed by DNA-disengaged RuvB subunits stimulates ATP hydrolysis and nucleotide exchange. Immobilization of the converter enables RuvB to convert the ATP-contained energy into a lever motion, pulling 2 nucleotides of DNA out of the RuvA tetramer per ATP hydrolyzed, thus driving DNA branch migration. The RuvB motors rotate together with the DNA substrate, which together with the progressing nucleotide cycle form the mechanistic basis for DNA recombination by continuous HJ branch migration. Branch migration allows RuvC to scan DNA until it finds its consensus sequence, where it cleaves and resolves cruciform DNA. This Rickettsia typhi (strain ATCC VR-144 / Wilmington) protein is Holliday junction branch migration complex subunit RuvB.